A 632-amino-acid chain; its full sequence is MSRVRDAGCVAAGIVIGAGAWYCVYKYTRGRDQTKKRMAKPKNRAVAGTGARARAGLRAGFTIDLGSGFSPPTPVRAEAEDRAQDEASALDTVGAEAVAPAASSAEAQSGAGSQAQEADGAGVGPKAESVVGAAMASAIAPPPGVTEALGAAEAPAMAGAPKVAEAPREAETSRAAVPPGTVVPTEAAAPTEVTEGPGVAAPTKVAEAPGVASPTEAAEAPVPATPTGAAAPTGAAESPGTSGSPRTAVVPGTSAAKKATPGAHTGAIPKATSATGAVPKGGGKGVTRSRNGGKGKGKKSKVEVDELGMGFRPGDGAAAAAAASANGGQAFLAEVPDSEEGESGWTDTESDSDSEPETQRRGRGRRPVAMQKRPFPYEIDEILGVRDLRKVLALLQKSDDPFIQQVALLTLSNNANYSCNQETIRKLGGLPIIANMINKTDPHIKEKALMAMNNLSENYENQGRLQVYMNKVMDDIMASNLNSAVQVVGLKFLTNMTITNDYQHLLVNSIANFFRLLSQGGGKIKVEILKILSNFAENPDMLKKLLSTQVPASFSSLYNSYVESEILINALTLFEIIYDNLRAEVFNYREFNKGSLFYLCTTSGVCVKKIRALANHHDLLVKVKVIKLVNKF.

Residues 1–6 (MSRVRD) are Mitochondrial intermembrane-facing. Positions 1 to 6 (MSRVRD) are mitochondrion outer membrane (MOM)-targeting sequence. The helical; Signal-anchor transmembrane segment at 7–25 (AGCVAAGIVIGAGAWYCVY) threads the bilayer. Positions 26-40 (KYTRGRDQTKKRMAK) are mitochondrion outer membrane (MOM)-targeting sequence. The Cytoplasmic segment spans residues 26–632 (KYTRGRDQTK…VKVIKLVNKF (607 aa)). Disordered regions lie at residues 68–124 (GFSP…AGVG), 160–304 (APKV…KVEV), and 335–369 (VPDS…RPVA). Composition is skewed to low complexity over residues 86–120 (EASA…EADG) and 211–241 (VASP…SPGT). The segment covering 336 to 356 (PDSEEGESGWTDTESDSDSEP) has biased composition (acidic residues). ARM repeat units follow at residues 376–416 (PYEI…NNAN), 418–457 (SCNQ…NLSE), and 498–537 (ITND…NFAE).

This sequence belongs to the eutherian X-chromosome-specific Armcx family. Expressed at high levels ovary, heart, testis, prostate, brain, spleen and colon. Expressed at very low levels in liver and thymus. Not expressed in peripheral blood leukocytes. Not expressed in pancreas and ovarian carcinomas.

Its subcellular location is the mitochondrion. The protein resides in the mitochondrion outer membrane. Its function is as follows. May regulate the dynamics and distribution of mitochondria in neural cells. The protein is Armadillo repeat-containing X-linked protein 2 (ARMCX2) of Homo sapiens (Human).